A 258-amino-acid polypeptide reads, in one-letter code: Large ribosomal subunit protein uL5c (258 aa).

A chloroplast-targeting transit peptide spans 1–38 (MASTSLLQSTSSSFAGVRFHCRTSAAPRVGLSSFTVKA).

In terms of assembly, component of the chloroplast large ribosomal subunit (LSU). Mature 70S chloroplast ribosomes of higher plants consist of a small (30S) and a large (50S) subunit. The 30S small subunit contains 1 molecule of ribosomal RNA (16S rRNA) and 24 different proteins. The 50S large subunit contains 3 rRNA molecules (23S, 5S and 4.5S rRNA) and 33 different proteins.

It is found in the plastid. The protein resides in the chloroplast. Its function is as follows. Component of the chloroplast ribosome (chloro-ribosome), a dedicated translation machinery responsible for the synthesis of chloroplast genome-encoded proteins, including proteins of the transcription and translation machinery and components of the photosynthetic apparatus. This chain is Large ribosomal subunit protein uL5c (RPL5), found in Spinacia oleracea (Spinach).